The following is a 98-amino-acid chain: Small ribosomal subunit protein bS6 (98 aa).

Belongs to the bacterial ribosomal protein bS6 family.

Its function is as follows. Binds together with bS18 to 16S ribosomal RNA. The sequence is that of Small ribosomal subunit protein bS6 from Moorella thermoacetica (strain ATCC 39073 / JCM 9320).